Reading from the N-terminus, the 428-residue chain is Histidine--tRNA ligase (428 aa).

The protein belongs to the class-II aminoacyl-tRNA synthetase family. Homodimer.

It is found in the cytoplasm. It carries out the reaction tRNA(His) + L-histidine + ATP = L-histidyl-tRNA(His) + AMP + diphosphate + H(+). This is Histidine--tRNA ligase from Lactobacillus delbrueckii subsp. bulgaricus (strain ATCC 11842 / DSM 20081 / BCRC 10696 / JCM 1002 / NBRC 13953 / NCIMB 11778 / NCTC 12712 / WDCM 00102 / Lb 14).